The sequence spans 341 residues: Uroporphyrinogen decarboxylase (341 aa).

Residues 23 to 27 (RQAGR), aspartate 73, tyrosine 147, serine 202, and histidine 318 contribute to the substrate site.

The protein belongs to the uroporphyrinogen decarboxylase family. Homodimer.

The protein resides in the cytoplasm. It catalyses the reaction uroporphyrinogen III + 4 H(+) = coproporphyrinogen III + 4 CO2. It functions in the pathway porphyrin-containing compound metabolism; protoporphyrin-IX biosynthesis; coproporphyrinogen-III from 5-aminolevulinate: step 4/4. In terms of biological role, catalyzes the decarboxylation of four acetate groups of uroporphyrinogen-III to yield coproporphyrinogen-III. The chain is Uroporphyrinogen decarboxylase from Novosphingobium aromaticivorans (strain ATCC 700278 / DSM 12444 / CCUG 56034 / CIP 105152 / NBRC 16084 / F199).